We begin with the raw amino-acid sequence, 449 residues long: TNF receptor-associated factor family protein DDB_G0272340 (449 aa).

An RING-type; degenerate zinc finger spans residues 33–76 (CPICEECIMDVNKCEALQCKEGHVHCRLCWMKSLESKKECMTCR). 2 TRAF-type zinc fingers span residues 133–187 (GHIK…IDDS) and 189–251 (VHYS…SELS). Residues 263–309 (MEATIDQHICKFEKSEKEYKKLELEYNRLKDDFKILQSELKVIRELK) are a coiled coil. Residues 311 to 437 (NYQNKWVITN…QNSVTLNINI (127 aa)) enclose the MATH domain.

The protein belongs to the TNF receptor-associated factor family. A subfamily.

The protein resides in the cytoplasm. Functionally, probable adapter protein and signal transducer that links members of the tumor necrosis factor receptor family to different signaling pathways by association with the receptor cytoplasmic domain and kinases. This Dictyostelium discoideum (Social amoeba) protein is TNF receptor-associated factor family protein DDB_G0272340.